A 435-amino-acid polypeptide reads, in one-letter code: MTNSKLTETLTFECETGNYHTFCPISCVAWLYQKIEDSFFLVIGTKTCGYFLQNALGVMIFAEPRYAMAELEEADISAQLNDYKELKRLCLQIKQDRNPSVIVWIGTCTTEIIKMDLEGMAPRLEAEIQTPIVVARANGLDYAFTQGEDTVLAAMVQRCPSNAPEQNQIEKKSLVLFGSLPTNVATQLNLELERCGIQVAGWLPSQRYADLPVLNQNVYVCGINPFLSRTATTLMRRRKCKLISAPFPIGPDGTRAWLEKICSVFNVAPINLIERERLIWDSLEDYIALLRGKSVFFMGDNLLEISLARFLVRCGMIVYEIGIPYLDKRFQSAELQLLEKTCSEMNVAMPRIVEKPDNYNQIQRIRELQPDLAITGMAHANPLEARGINTKWSVEFTFAQIHGFTNARDILELVTRPLRRNKALENLGWNQLVKM.

3 residues coordinate [4Fe-4S] cluster: cysteine 23, cysteine 48, and cysteine 108.

Belongs to the BchN/ChlN family. As to quaternary structure, protochlorophyllide reductase is composed of three subunits; ChlL, ChlN and ChlB. Forms a heterotetramer of two ChlB and two ChlN subunits. [4Fe-4S] cluster serves as cofactor.

The protein resides in the plastid. The protein localises to the chloroplast. It carries out the reaction chlorophyllide a + oxidized 2[4Fe-4S]-[ferredoxin] + 2 ADP + 2 phosphate = protochlorophyllide a + reduced 2[4Fe-4S]-[ferredoxin] + 2 ATP + 2 H2O. It functions in the pathway porphyrin-containing compound metabolism; chlorophyll biosynthesis (light-independent). In terms of biological role, component of the dark-operative protochlorophyllide reductase (DPOR) that uses Mg-ATP and reduced ferredoxin to reduce ring D of protochlorophyllide (Pchlide) to form chlorophyllide a (Chlide). This reaction is light-independent. The NB-protein (ChlN-ChlB) is the catalytic component of the complex. The polypeptide is Light-independent protochlorophyllide reductase subunit N (Auxenochlorella protothecoides (Green microalga)).